Reading from the N-terminus, the 203-residue chain is Cardiotrophin-1 (203 aa).

The protein belongs to the IL-6 superfamily. Expressed in the ventricle and atrium of adult rats. Also detected in the lung, kidney, liver, skeletal muscle, stomach and urinary bladder. Not detected in brain, colon, testis, spleen or thymus. Overexpressed in the ventricles in the case of hypertension and hypertrophy.

The protein resides in the secreted. In terms of biological role, induces cardiac myocyte hypertrophy in vitro. Binds to and activates the ILST/gp130 receptor. In Rattus norvegicus (Rat), this protein is Cardiotrophin-1 (Ctf1).